A 462-amino-acid chain; its full sequence is PTS system mannitol-specific cryptic EIICB component (462 aa).

Over 1–24 the chain is Cytoplasmic; the sequence is MENKSARAKVQAFGGFLTAMVIPN. The PTS EIIC type-2 domain occupies 13-344; the sequence is FGGFLTAMVI…LKMEKTVETE (332 aa). The helical transmembrane segment at 25 to 46 threads the bilayer; it reads IGAFIAWGFITALFIPTGWLPN. Over 47-50 the chain is Periplasmic; sequence EHFA. The chain crosses the membrane as a helical span at residues 51-71; the sequence is KIVGPMITYLLPVMIGSTGGH. The Cytoplasmic segment spans residues 72 to 134; that stretch reads LVGGKRGAVM…AGFEMVINNF (63 aa). A helical transmembrane segment spans residues 135–156; that stretch reads SLGIAGMLLCLLGFEVIGPAVL. Residues 157–165 are Periplasmic-facing; sequence IANTFVKEC. The helical transmembrane segment at 166–186 threads the bilayer; that stretch reads IEALVHAGYLPLLSVINEPAK. The Cytoplasmic segment spans residues 187-273; sequence VLFLNNAIDQ…VLMKPLTIIA (87 aa). Residues 274–293 form a helical membrane-spanning segment; it reads MIAGGMSGTWMFNLLDGGLV. Topologically, residues 294 to 313 are periplasmic; sequence AGPSPGSIFAYLALTPKGSF. The helical transmembrane segment at 314–335 threads the bilayer; sequence LATIAGVTVGTLVSFAITSLIL. Over 336–462 the chain is Cytoplasmic; sequence KMEKTVETES…FNQLTAEHKH (127 aa). Positions 371–461 constitute a PTS EIIB type-2 domain; that stretch reads KRIAFVCDAG…LFNQLTAEHK (91 aa). The active-site Phosphocysteine intermediate; for EIIB activity is C377. C377 bears the Phosphocysteine; by EIIA mark.

It is found in the cell inner membrane. The enzyme catalyses D-mannitol(out) + N(pros)-phospho-L-histidyl-[protein] = D-mannitol 1-phosphate(in) + L-histidyl-[protein]. The phosphoenolpyruvate-dependent sugar phosphotransferase system (sugar PTS), a major carbohydrate active transport system, catalyzes the phosphorylation of incoming sugar substrates concomitantly with their translocation across the cell membrane. The enzyme II CmtAB PTS system is involved in D-mannitol transport. The protein is PTS system mannitol-specific cryptic EIICB component (cmtA) of Escherichia coli O157:H7.